The primary structure comprises 349 residues: Mannonate dehydratase (349 aa).

It belongs to the mannonate dehydratase family. Fe(2+) is required as a cofactor. Mn(2+) serves as cofactor.

The enzyme catalyses D-mannonate = 2-dehydro-3-deoxy-D-gluconate + H2O. It functions in the pathway carbohydrate metabolism; pentose and glucuronate interconversion. Functionally, catalyzes the dehydration of D-mannonate. The sequence is that of Mannonate dehydratase from Oceanobacillus iheyensis (strain DSM 14371 / CIP 107618 / JCM 11309 / KCTC 3954 / HTE831).